Here is a 273-residue protein sequence, read N- to C-terminus: Dermonecrotic toxin LdSicTox-alphaIB1av (273 aa).

His-5 is an active-site residue. Mg(2+)-binding residues include Glu-25 and Asp-27. His-41 (nucleophile) is an active-site residue. 2 cysteine pairs are disulfide-bonded: Cys-45–Cys-51 and Cys-47–Cys-190. Mg(2+) is bound at residue Asp-85. N-linked (GlcNAc...) asparagine glycosylation is present at Asn-250.

This sequence belongs to the arthropod phospholipase D family. Class II subfamily. Requires Mg(2+) as cofactor. Expressed by the venom gland.

Its subcellular location is the secreted. It carries out the reaction an N-(acyl)-sphingosylphosphocholine = an N-(acyl)-sphingosyl-1,3-cyclic phosphate + choline. The catalysed reaction is an N-(acyl)-sphingosylphosphoethanolamine = an N-(acyl)-sphingosyl-1,3-cyclic phosphate + ethanolamine. It catalyses the reaction a 1-acyl-sn-glycero-3-phosphocholine = a 1-acyl-sn-glycero-2,3-cyclic phosphate + choline. The enzyme catalyses a 1-acyl-sn-glycero-3-phosphoethanolamine = a 1-acyl-sn-glycero-2,3-cyclic phosphate + ethanolamine. Functionally, dermonecrotic toxins cleave the phosphodiester linkage between the phosphate and headgroup of certain phospholipids (sphingolipid and lysolipid substrates), forming an alcohol (often choline) and a cyclic phosphate. This toxin acts on sphingomyelin (SM). It may also act on ceramide phosphoethanolamine (CPE), lysophosphatidylcholine (LPC) and lysophosphatidylethanolamine (LPE), but not on lysophosphatidylserine (LPS), and lysophosphatidylglycerol (LPG). It acts by transphosphatidylation, releasing exclusively cyclic phosphate products as second products. Induces dermonecrosis, hemolysis, increased vascular permeability, edema, inflammatory response, and platelet aggregation. The sequence is that of Dermonecrotic toxin LdSicTox-alphaIB1av from Loxosceles deserta (Desert recluse spider).